The following is a 61-amino-acid chain: Ferredoxin-3 (61 aa).

4Fe-4S ferredoxin-type domains follow at residues 2 to 31 (YKIT…LQDG) and 32 to 61 (KAVA…VEEN). [3Fe-4S] cluster is bound by residues Cys11 and Cys17. 4 residues coordinate [4Fe-4S] cluster: Cys21, Cys41, Cys44, and Cys47. Position 51 (Cys51) interacts with [3Fe-4S] cluster.

The cofactor is [3Fe-4S] cluster. It depends on [4Fe-4S] cluster as a cofactor.

In terms of biological role, ferredoxins are iron-sulfur proteins that transfer electrons in a wide variety of metabolic reactions. The polypeptide is Ferredoxin-3 (Desulfocurvibacter africanus (Desulfovibrio africanus)).